Consider the following 179-residue polypeptide: Large ribosomal subunit protein uL6 (179 aa).

This sequence belongs to the universal ribosomal protein uL6 family. As to quaternary structure, part of the 50S ribosomal subunit.

This protein binds to the 23S rRNA, and is important in its secondary structure. It is located near the subunit interface in the base of the L7/L12 stalk, and near the tRNA binding site of the peptidyltransferase center. This is Large ribosomal subunit protein uL6 from Buchnera aphidicola subsp. Baizongia pistaciae (strain Bp).